The chain runs to 422 residues: Cytochrome P-450 monooxygenase DoxA (422 aa).

A heme-binding site is contributed by cysteine 369.

This sequence belongs to the cytochrome P450 family. As to quaternary structure, monomer. It depends on heme as a cofactor.

The protein resides in the cytoplasm. It carries out the reaction 13-deoxydaunorubicin + NADPH + O2 + H(+) = 13-dihydrodaunorubicin + NADP(+) + H2O. It catalyses the reaction 13-dihydrodaunorubicin + NADPH + O2 + H(+) = daunorubicin + NADP(+) + 2 H2O. The catalysed reaction is 13-deoxycarminomycin + NADPH + O2 + H(+) = 13-dihydrocarminomycin + NADP(+) + H2O. The enzyme catalyses 13-dihydrocarminomycin + NADPH + O2 + H(+) = carminomycin + NADP(+) + 2 H2O. Its pathway is antibiotic biosynthesis; daunorubicin biosynthesis. It participates in antibiotic biosynthesis; carminomycin biosynthesis. With respect to regulation, strongly inhibited by dithiothreitol and high ionic strength buffers. Its function is as follows. Involved in the biosynthesis of the anthracyclines carminomycin and daunorubicin (daunomycin) which are aromatic polyketide antibiotics that exhibit high cytotoxicity and are widely applied in the chemotherapy of a variety of cancers. In vivo, DoxA catalyzes the C-13 hydroxylation of 13-deoxycarminomycin and 13-deoxydaunorubicin to yield 13-dihydrocarminomycin and 13-dihydrodaunorubicin, respectively, as well as the oxidation of these 13-dihydro-anthracyclines to their respective 13-keto forms, carminomycin and daunorubicin. In vitro, it also catalyzes the C-14 hydroxylation of daunorubicin to form doxorubicin (adriamycin), although this strain is not a doxorubicin producer. It is not able to accept anthracyclinones (aglycones) and anthracyclines with a 10-carbomethoxyl moiety. 13-oxidation of the anthracyclines possessing the 4-methoxy substitution is greatly favored. The anthracycline analog desacetyladriamycin can be oxidized to 10-hydroxydesacetyladriamycin. It can only use NADP. DoxA acts jointly with DauV. The chain is Cytochrome P-450 monooxygenase DoxA (doxA) from Streptomyces sp. (strain C5).